The following is a 481-amino-acid chain: Uridine 5'-monophosphate synthase (481 aa).

Residues methionine 1–leucine 214 are OPRTase. Position 37 is a phosphotyrosine (tyrosine 37). The tract at residues proline 215–lysine 220 is domain linker. Residues alanine 221–glutamine 481 are OMPdecase. Residue serine 257 participates in orotidine 5'-phosphate binding. UMP contacts are provided by residues serine 257, aspartate 259, and lysine 281–histidine 283. Residues lysine 281, lysine 314, aspartate 317, threonine 321, serine 372, glutamine 430 to tyrosine 432, and glycine 450 to arginine 451 contribute to the orotidine 5'-phosphate site. Residues lysine 314 and aspartate 317 each act as for OMPdecase activity in the active site. Residues aspartate 317, threonine 321, serine 372, glutamine 430–tyrosine 432, and glycine 450–arginine 451 contribute to the UMP site.

This sequence in the N-terminal section; belongs to the purine/pyrimidine phosphoribosyltransferase family. In the C-terminal section; belongs to the OMP decarboxylase family. In terms of assembly, homodimer; dimerization is required for enzymatic activity.

It catalyses the reaction orotidine 5'-phosphate + diphosphate = orotate + 5-phospho-alpha-D-ribose 1-diphosphate. The catalysed reaction is orotidine 5'-phosphate + H(+) = UMP + CO2. It functions in the pathway pyrimidine metabolism; UMP biosynthesis via de novo pathway; UMP from orotate: step 1/2. Its pathway is pyrimidine metabolism; UMP biosynthesis via de novo pathway; UMP from orotate: step 2/2. In terms of biological role, bifunctional enzyme catalyzing the last two steps of de novo pyrimidine biosynthesis, orotate phosphoribosyltransferase (OPRT), which converts orotate to orotidine-5'-monophosphate (OMP), and orotidine-5'-monophosphate decarboxylase (ODC), the terminal enzymatic reaction that decarboxylates OMP to uridine monophosphate (UMP). The protein is Uridine 5'-monophosphate synthase (Umps) of Mus musculus (Mouse).